The following is a 271-amino-acid chain: NADPH-dependent 7-cyano-7-deazaguanine reductase (271 aa).

Substrate is bound at residue 81-83 (IES). 83–84 (SK) provides a ligand contact to NADPH. The active-site Thioimide intermediate is the cysteine 177. Residue aspartate 184 is the Proton donor of the active site. Residue 216–217 (HE) coordinates substrate. 245–246 (RG) contacts NADPH.

This sequence belongs to the GTP cyclohydrolase I family. QueF type 2 subfamily. Homodimer.

The protein resides in the cytoplasm. The enzyme catalyses 7-aminomethyl-7-carbaguanine + 2 NADP(+) = 7-cyano-7-deazaguanine + 2 NADPH + 3 H(+). It participates in tRNA modification; tRNA-queuosine biosynthesis. Functionally, catalyzes the NADPH-dependent reduction of 7-cyano-7-deazaguanine (preQ0) to 7-aminomethyl-7-deazaguanine (preQ1). This is NADPH-dependent 7-cyano-7-deazaguanine reductase from Xanthomonas campestris pv. campestris (strain B100).